The chain runs to 105 residues: Large ribosomal subunit protein bL21 (105 aa).

This sequence belongs to the bacterial ribosomal protein bL21 family. In terms of assembly, part of the 50S ribosomal subunit. Contacts protein L20.

Its function is as follows. This protein binds to 23S rRNA in the presence of protein L20. The sequence is that of Large ribosomal subunit protein bL21 from Rhizobium johnstonii (strain DSM 114642 / LMG 32736 / 3841) (Rhizobium leguminosarum bv. viciae).